We begin with the raw amino-acid sequence, 171 residues long: Apoptosis regulator Bcl-2 homolog (171 aa).

In terms of assembly, interacts with host BECN1; this interaction inhibits host autophagy. Interacts with host BAK1 and BAX.

The protein resides in the host cytoplasm. Functionally, plays a role in the protection against apoptosis mediated by cytotoxic cells during the immune response to acute and persistent viral infection. Contributes therefore to latency establishment. Plays also a role in the inhibition of host starvation-induced autophagy which ultimately contributes to the viral chronic infection. The sequence is that of Apoptosis regulator Bcl-2 homolog (vBCL2) from Murid herpesvirus 4 (MuHV-4).